The chain runs to 185 residues: Capsid protein (185 aa).

Positions 135 to 185 (PNAPILSTLPETTVVRRRDRGRSPRRRTPSPRRRRSQSPRRRRSQSRESQC) are disordered. Residues 149–178 (VRRRDRGRSPRRRTPSPRRRRSQSPRRRRS) show a composition bias toward basic residues. Residues S157, S164, and S172 each carry the phosphoserine; by host modification. A 1; half-length repeat occupies 157-163 (SPRRRTP). The interval 157–179 (SPRRRTPSPRRRRSQSPRRRRSQ) is 3 X 8 AA repeats of S-P-R-R-R-[PR]-S-Q. Residues 160–177 (RRTPSPRRRRSQSPRRRR) carry the Bipartite nuclear localization signal motif. A run of 2 repeats spans residues 164–171 (SPRRRRSQ) and 172–179 (SPRRRRSQ). Positions 179–185 (QSRESQC) are RNA binding.

It belongs to the orthohepadnavirus core antigen family. In terms of assembly, homodimerizes, then multimerizes. Interacts with cytosol exposed regions of viral L glycoprotein present in the reticulum-to-Golgi compartment. Interacts with human FLNB. Phosphorylated form interacts with host importin alpha; this interaction depends on the exposure of the NLS, which itself depends upon genome maturation and/or phosphorylation of the capsid protein. Interacts with host NUP153. Phosphorylated by host SRPK1, SRPK2, and maybe protein kinase C or GAPDH. Phosphorylation is critical for pregenomic RNA packaging. Protein kinase C phosphorylation is stimulated by HBx protein and may play a role in transport of the viral genome to the nucleus at the late step during the viral replication cycle.

It is found in the virion. Its subcellular location is the host cytoplasm. In terms of biological role, self assembles to form an icosahedral capsid. Most capsids appear to be large particles with an icosahedral symmetry of T=4 and consist of 240 copies of capsid protein, though a fraction forms smaller T=3 particles consisting of 180 capsid proteins. Entering capsids are transported along microtubules to the nucleus. Phosphorylation of the capsid is thought to induce exposure of nuclear localization signal in the C-terminal portion of the capsid protein that allows binding to the nuclear pore complex via the importin (karyopherin-) alpha and beta. Capsids are imported in intact form through the nuclear pore into the nuclear basket, where it probably binds NUP153. Only capsids that contain the mature viral genome can release the viral DNA and capsid protein into the nucleoplasm. Immature capsids get stuck in the basket. Capsids encapsulate the pre-genomic RNA and the P protein. Pre-genomic RNA is reverse-transcribed into DNA while the capsid is still in the cytoplasm. The capsid can then either be directed to the nucleus, providing more genomes for transcription, or bud through the endoplasmic reticulum to provide new virions. This Hepatitis B virus genotype A3 (isolate Cameroon/CMR711/1994) (HBV-A) protein is Capsid protein.